Reading from the N-terminus, the 423-residue chain is Cytochrome c biogenesis protein Ccs1 (423 aa).

3 helical membrane-spanning segments follow: residues 11–31, 70–90, and 153–173; these read LKFAIALLLLISITITFGSII, NFWFISLLLSLGISLIACTFF, and IAPVFVHLSIILILLGSIFAS.

The protein belongs to the Ccs1/CcsB family. In terms of assembly, may interact with CcsA.

It localises to the plastid. The protein resides in the chloroplast thylakoid membrane. In terms of biological role, required during biogenesis of c-type cytochromes (cytochrome c6 and cytochrome f) at the step of heme attachment. This is Cytochrome c biogenesis protein Ccs1 from Heterosigma akashiwo (strain NIES-293 / 8280G21-1).